We begin with the raw amino-acid sequence, 179 residues long: MNRLKEKYLNEVVPALMSKFNYKSIMQVPKIEKIVINMGVGDAVQNPKALDSAVEELTLIAGQRPVVTRAKKSIAGFRLRQGMPIGAKVTLRGERMYEFLDKLISVSLPRVRDFRGVSKKSFDGRGNYTLGIKEQLIFPEIDYDKVNKVRGMDIVIVTTANTDEEARELLALLGMPFQK.

This sequence belongs to the universal ribosomal protein uL5 family. Part of the 50S ribosomal subunit; part of the 5S rRNA/L5/L18/L25 subcomplex. Contacts the 5S rRNA and the P site tRNA. Forms a bridge to the 30S subunit in the 70S ribosome.

Its function is as follows. This is one of the proteins that bind and probably mediate the attachment of the 5S RNA into the large ribosomal subunit, where it forms part of the central protuberance. In the 70S ribosome it contacts protein S13 of the 30S subunit (bridge B1b), connecting the 2 subunits; this bridge is implicated in subunit movement. Contacts the P site tRNA; the 5S rRNA and some of its associated proteins might help stabilize positioning of ribosome-bound tRNAs. This Geobacillus kaustophilus (strain HTA426) protein is Large ribosomal subunit protein uL5.